Consider the following 755-residue polypeptide: Tryptophan 2-monooxygenase (755 aa).

FMN is bound by residues serine 247, glutamate 267, lysine 275, and arginine 295. A substrate-binding site is contributed by arginine 295.

It belongs to the tryptophan 2-monooxygenase family. FMN is required as a cofactor.

It carries out the reaction L-tryptophan + O2 = indole-3-acetamide + CO2 + H2O. It participates in plant hormone metabolism; auxin biosynthesis. In Rhizobium radiobacter (Agrobacterium tumefaciens), this protein is Tryptophan 2-monooxygenase (tms1).